We begin with the raw amino-acid sequence, 284 residues long: MPELPEVETLRRDLLIHLPGERVVGVEVLRSDSVGYPADPAIFIEQMQGQIFSDRMLRRGKYLLLYFARGAALGVHLRMSGRLLWRCGEAPLEPHTRVRIPMASGHELRFEDMRVFGRLWLIPVGVPPERVMGGLTRLGPEPFAEMFDGPYLAGRFAGRNQPVKSALLDQQLVAGVGNIYADEALFSSGIHPALPVGGLDAAALERLHRAVVKVLEAGIAQRGATLRNYTDAQGINGNYAGTAWVYGRKGQPCRVCNTPIERIRLAGRSTHFCPTCQRAQQSVQ.

The active-site Schiff-base intermediate with DNA is Pro2. The active-site Proton donor is Glu3. Lys61 (proton donor; for beta-elimination activity) is an active-site residue. DNA contacts are provided by His95, Arg114, and Arg159. Residues 244 to 278 form an FPG-type zinc finger; the sequence is WVYGRKGQPCRVCNTPIERIRLAGRSTHFCPTCQR. Catalysis depends on Arg268, which acts as the Proton donor; for delta-elimination activity.

The protein belongs to the FPG family. As to quaternary structure, monomer. Requires Zn(2+) as cofactor.

It carries out the reaction Hydrolysis of DNA containing ring-opened 7-methylguanine residues, releasing 2,6-diamino-4-hydroxy-5-(N-methyl)formamidopyrimidine.. The enzyme catalyses 2'-deoxyribonucleotide-(2'-deoxyribose 5'-phosphate)-2'-deoxyribonucleotide-DNA = a 3'-end 2'-deoxyribonucleotide-(2,3-dehydro-2,3-deoxyribose 5'-phosphate)-DNA + a 5'-end 5'-phospho-2'-deoxyribonucleoside-DNA + H(+). In terms of biological role, involved in base excision repair of DNA damaged by oxidation or by mutagenic agents. Acts as a DNA glycosylase that recognizes and removes damaged bases. Has a preference for oxidized purines, such as 7,8-dihydro-8-oxoguanine (8-oxoG). Has AP (apurinic/apyrimidinic) lyase activity and introduces nicks in the DNA strand. Cleaves the DNA backbone by beta-delta elimination to generate a single-strand break at the site of the removed base with both 3'- and 5'-phosphates. This is Formamidopyrimidine-DNA glycosylase from Gloeobacter violaceus (strain ATCC 29082 / PCC 7421).